A 992-amino-acid chain; its full sequence is Disks large-associated protein 1 (992 aa).

2 disordered regions span residues 154–209 and 355–375; these read SLEG…SWWS and KAMGDEDSGDSDTSPKPSPKV. S169 is modified (phosphoserine). Residues 195 to 209 show a composition bias toward low complexity; the sequence is SNASNASPTSPSWWS. Phosphoserine is present on residues S362, S365, S368, S372, S389, S418, S421, S425, S428, S437, S509, S516, and S578. T579 bears the Phosphothreonine mark. A phosphoserine mark is found at S581 and S605. Phosphothreonine is present on T606. A phosphoserine mark is found at S608 and S611. Interaction with DYL2 regions lie at residues 665–676 and 687–698; these read LSIGIQVDDAEE and SKFQSVGVQVEE. Residues 914–980 form a disordered region; that stretch reads WKQMDPLDKK…QNSATESAES (67 aa). Composition is skewed to basic and acidic residues over residues 918-927 and 943-958; these read DPLDKKERRA and IRERSLESSQRQEARK. At S947 the chain carries Phosphoserine. A compositionally biased stretch (polar residues) spans 969–978; the sequence is VRQNSATESA. The PDZ-binding motif lies at 990-992; sequence TRL.

This sequence belongs to the SAPAP family. Interacts with guanylate kinase-like domain of DLG1, DLG2, DLG3, DLG4 and AIP1. Interacts with the PDZ domain of SHANK1, SHANK2 and SHANK3. Found in a complex with DLG4 and SHANK1, SHANK2 or SHANK3. Found in a complex with DLG4 and BEGAIN. Interacts with DYL2 and LRFN1. Interacts with MPP2 (via the SH3-Guanylate kinase-like sub-module). In terms of processing, ubiquitinated by TRIM3; leading to proteasomal degradation. Expressed in brain and testis.

It localises to the cell membrane. It is found in the postsynaptic density. Its subcellular location is the synapse. Its function is as follows. Part of the postsynaptic scaffold in neuronal cells. The polypeptide is Disks large-associated protein 1 (Rattus norvegicus (Rat)).